Consider the following 628-residue polypeptide: Monoterpene synthase like 2, chloroplastic (628 aa).

Residues Asp379, Asp383, and Asp531 each contribute to the Mg(2+) site. The DDXXD motif signature appears at 379–383 (DDIYD).

It belongs to the terpene synthase family. Tpsd subfamily. Requires Mg(2+) as cofactor. Mn(2+) is required as a cofactor.

Its subcellular location is the plastid. The protein resides in the chloroplast. Its pathway is terpene metabolism; oleoresin biosynthesis. It functions in the pathway secondary metabolite biosynthesis; terpenoid biosynthesis. Functionally, monoterpene synthase (TPS) involved in the biosynthesis of monoterpene natural products included in conifer oleoresin secretions and volatile emissions; these compounds contribute to biotic and abiotic stress defense against herbivores and pathogens. In Pinus banksiana (Jack pine), this protein is Monoterpene synthase like 2, chloroplastic.